Reading from the N-terminus, the 128-residue chain is Ribosome-binding factor A (128 aa).

This sequence belongs to the RbfA family. Monomer. Binds 30S ribosomal subunits, but not 50S ribosomal subunits or 70S ribosomes.

The protein localises to the cytoplasm. Its function is as follows. One of several proteins that assist in the late maturation steps of the functional core of the 30S ribosomal subunit. Associates with free 30S ribosomal subunits (but not with 30S subunits that are part of 70S ribosomes or polysomes). Required for efficient processing of 16S rRNA. May interact with the 5'-terminal helix region of 16S rRNA. The polypeptide is Ribosome-binding factor A (Idiomarina loihiensis (strain ATCC BAA-735 / DSM 15497 / L2-TR)).